The chain runs to 236 residues: Alpha-acetolactate decarboxylase (236 aa).

This sequence belongs to the alpha-acetolactate decarboxylase family.

The catalysed reaction is (2S)-2-acetolactate + H(+) = (R)-acetoin + CO2. The protein operates within polyol metabolism; (R,R)-butane-2,3-diol biosynthesis; (R,R)-butane-2,3-diol from pyruvate: step 2/3. Its function is as follows. Converts acetolactate into acetoin. This Lactococcus lactis subsp. lactis (strain IL1403) (Streptococcus lactis) protein is Alpha-acetolactate decarboxylase (aldB).